Reading from the N-terminus, the 512-residue chain is Retinaldehyde dehydrogenase 3 (512 aa).

Residues 1–22 (MATTNGAVENGQPDGKPPALPR) form a disordered region. At Ala-2 the chain carries N-acetylalanine. Residues Lys-204, Glu-207, and 257–262 (GSTEVG) each bind NAD(+). Glu-280 serves as the catalytic Proton acceptor. Catalysis depends on Cys-314, which acts as the Nucleophile. Gln-361 and Glu-411 together coordinate NAD(+).

This sequence belongs to the aldehyde dehydrogenase family. As to quaternary structure, homotetramer. As to expression, detected in embryonic head (at protein level). Ventral retina.

It localises to the cytoplasm. The enzyme catalyses retinal + NAD(+) + H2O = retinoate + NADH + 2 H(+). The catalysed reaction is all-trans-retinal + NAD(+) + H2O = all-trans-retinoate + NADH + 2 H(+). It carries out the reaction all-trans-13,14-dihydroretinal + NAD(+) + H2O = all-trans-13,14-dihydroretinoate + NADH + 2 H(+). It participates in cofactor metabolism; retinol metabolism. Functionally, catalyzes the NAD-dependent oxidation of aldehyde substrates, such as all-trans-retinal and all-trans-13,14-dihydroretinal, to their corresponding carboxylic acids, all-trans-retinoate and all-trans-13,14-dihydroretinoate, respectively. High specificity for all-trans-retinal as substrate, can also accept acetaldehyde as substrate in vitro but with lower affinity. Required for the biosynthesis of normal levels of retinoate in the embryonic ocular and nasal regions; a critical lipid in the embryonic development of the eye and the nasal region. This Mus musculus (Mouse) protein is Retinaldehyde dehydrogenase 3 (Aldh1a3).